The sequence spans 101 residues: Small ribosomal subunit protein uS14 (101 aa).

Belongs to the universal ribosomal protein uS14 family. As to quaternary structure, part of the 30S ribosomal subunit. Contacts proteins S3 and S10.

Its function is as follows. Binds 16S rRNA, required for the assembly of 30S particles and may also be responsible for determining the conformation of the 16S rRNA at the A site. This Methylorubrum extorquens (strain PA1) (Methylobacterium extorquens) protein is Small ribosomal subunit protein uS14.